The sequence spans 216 residues: Sperm microtubule inner protein 8 (216 aa).

As to quaternary structure, microtubule inner protein component of sperm flagellar doublet microtubules.

It is found in the cytoplasm. Its subcellular location is the cytoskeleton. The protein localises to the flagellum axoneme. In terms of biological role, microtubule inner protein (MIP) part of the dynein-decorated doublet microtubules (DMTs) in flagellum axoneme. May serve to reinforce and thus stabilize the microtubule structure in the sperm flagella. This chain is Sperm microtubule inner protein 8 (Spmip8), found in Rattus norvegicus (Rat).